Reading from the N-terminus, the 188-residue chain is Putative pre-16S rRNA nuclease (188 aa).

A disordered region spans residues 144 to 188 (HAPGRVVAGPKGRRKARHRGQGGTGTEQQADAGGRARPHATEGKG). Basic residues predominate over residues 154–163 (KGRRKARHRG).

This sequence belongs to the YqgF nuclease family.

Its subcellular location is the cytoplasm. Its function is as follows. Could be a nuclease involved in processing of the 5'-end of pre-16S rRNA. The protein is Putative pre-16S rRNA nuclease of Kineococcus radiotolerans (strain ATCC BAA-149 / DSM 14245 / SRS30216).